The following is a 267-amino-acid chain: Aliphatic sulfonates import ATP-binding protein SsuB 1 (267 aa).

The 215-residue stretch at 35-249 folds into the ABC transporter domain; that stretch reads VRVRGLRRVF…RRADPAFDRL (215 aa). An ATP-binding site is contributed by 67-74; sequence GRSGSGKS.

It belongs to the ABC transporter superfamily. Aliphatic sulfonates importer (TC 3.A.1.17.2) family. The complex is composed of two ATP-binding proteins (SsuB), two transmembrane proteins (SsuC) and a solute-binding protein (SsuA).

Its subcellular location is the cell membrane. The enzyme catalyses ATP + H2O + aliphatic sulfonate-[sulfonate-binding protein]Side 1 = ADP + phosphate + aliphatic sulfonateSide 2 + [sulfonate-binding protein]Side 1.. Part of the ABC transporter complex SsuABC involved in aliphatic sulfonates import. Responsible for energy coupling to the transport system. The polypeptide is Aliphatic sulfonates import ATP-binding protein SsuB 1 (Frankia alni (strain DSM 45986 / CECT 9034 / ACN14a)).